The sequence spans 556 residues: Testis-specific protein 10-interacting protein (556 aa).

Positions 1 to 20 are enriched in polar residues; it reads MGQETNMLNAHQQLVRTSSG. 2 disordered regions span residues 1–102 and 180–320; these read MGQE…SPRK and CTSI…GPWD. Basic residues predominate over residues 75–85; the sequence is KDRRLRGRNKK. Acidic residues-rich tracts occupy residues 213–225 and 246–260; these read EPEE…LGAE and LEEE…EAED. The segment covering 266–278 has biased composition (basic residues); it reads PWRRRTSSRRKGR. The segment covering 304–320 has biased composition (basic and acidic residues); the sequence is EPQRRKPRAKELEGPWD. Residues 387-463 are a coiled coil; that stretch reads LRAWELQQRE…ELQGIQHRVQ (77 aa). A disordered region spans residues 503–556; the sequence is AGKRDMEGAPRRHRSHRSVGARMEPSSQSPPKMEPTGSQADQHFAPNPDQELSP. The segment covering 527 to 543 has biased composition (polar residues); that stretch reads PSSQSPPKMEPTGSQAD.

This is Testis-specific protein 10-interacting protein (TSGA10IP) from Bos taurus (Bovine).